Here is a 405-residue protein sequence, read N- to C-terminus: Eukaryotic initiation factor 4A (405 aa).

A Q motif motif is present at residues 31-59 (ECFEALNLEGDLLRGIFAYGFEKPSAIQQ). Residues 62-232 (IKPILDGYDT…TQFMRDPKRI (171 aa)) form the Helicase ATP-binding domain. Position 75-82 (75-82 (AQSGTGKT)) interacts with ATP. Residues 180-183 (DEAD) carry the DEAD box motif. The Helicase C-terminal domain maps to 243–404 (GIRQFYVGVE…EMPMGITDIL (162 aa)).

Belongs to the DEAD box helicase family. eIF4A subfamily. As to quaternary structure, eIF4F is a multi-subunit complex, the composition of which varies with external and internal environmental conditions. It is composed of at least EIF4A, EIF4E and EIF4G.

The enzyme catalyses ATP + H2O = ADP + phosphate + H(+). ATP-dependent RNA helicase which is a subunit of the eIF4F complex involved in cap recognition and is required for mRNA binding to ribosome. In the current model of translation initiation, eIF4A unwinds RNA secondary structures in the 5'-UTR of mRNAs which is necessary to allow efficient binding of the small ribosomal subunit, and subsequent scanning for the initiator codon. This chain is Eukaryotic initiation factor 4A (EIF4-A), found in Cryptosporidium parvum.